A 778-amino-acid chain; its full sequence is Endonuclease MutS2 (778 aa).

328 to 335 is a binding site for ATP; the sequence is GPNTGGKT. One can recognise a Smr domain in the interval 703-778; that stretch reads LDLRGKRYEE…GSGCTIANLG (76 aa).

Belongs to the DNA mismatch repair MutS family. MutS2 subfamily. Homodimer. Binds to stalled ribosomes, contacting rRNA.

Its function is as follows. Endonuclease that is involved in the suppression of homologous recombination and thus may have a key role in the control of bacterial genetic diversity. In terms of biological role, acts as a ribosome collision sensor, splitting the ribosome into its 2 subunits. Detects stalled/collided 70S ribosomes which it binds and splits by an ATP-hydrolysis driven conformational change. Acts upstream of the ribosome quality control system (RQC), a ribosome-associated complex that mediates the extraction of incompletely synthesized nascent chains from stalled ribosomes and their subsequent degradation. Probably generates substrates for RQC. This Streptococcus equi subsp. equi (strain 4047) protein is Endonuclease MutS2.